The following is a 213-amino-acid chain: Ribonuclease Oy (213 aa).

Residue histidine 35 is part of the active site. The cysteines at positions 51 and 96 are disulfide-linked. Asparagine 52 carries N-linked (GlcNAc...) asparagine glycosylation. Active-site residues include glutamate 89 and histidine 93. 2 N-linked (GlcNAc...) asparagine glycosylation sites follow: asparagine 121 and asparagine 142. Disulfide bonds link cysteine 160–cysteine 198 and cysteine 178–cysteine 188.

It belongs to the RNase T2 family.

Its subcellular location is the secreted. Releases mononucleotides from RNA in the order of 3'-GMP, 3'-AMP and 3'-UMP. This Magallana gigas (Pacific oyster) protein is Ribonuclease Oy.